We begin with the raw amino-acid sequence, 219 residues long: Probable glucosamine 6-phosphate N-acetyltransferase (219 aa).

Positions 42 to 198 (MKVRPLKDTD…EGPTLKRNAT (157 aa)) constitute an N-acetyltransferase domain. Residues Thr-64, 111-114 (KFIH), and 123-125 (EDV) contribute to the substrate site. 133–138 (GKQLGK) lines the acetyl-CoA pocket. Substrate is bound by residues 154-155 (YK) and Arg-186.

This sequence belongs to the acetyltransferase family. GNA1 subfamily.

The catalysed reaction is D-glucosamine 6-phosphate + acetyl-CoA = N-acetyl-D-glucosamine 6-phosphate + CoA + H(+). It functions in the pathway nucleotide-sugar biosynthesis; UDP-N-acetyl-alpha-D-glucosamine biosynthesis; N-acetyl-alpha-D-glucosamine 1-phosphate from alpha-D-glucosamine 6-phosphate (route I): step 1/2. This Drosophila melanogaster (Fruit fly) protein is Probable glucosamine 6-phosphate N-acetyltransferase.